Consider the following 258-residue polypeptide: Phosphonates import ATP-binding protein PhnC 3 (258 aa).

Residues 2–246 (IEFKNVSLVY…TFEEIYGRKI (245 aa)) enclose the ABC transporter domain. ATP is bound at residue 35–42 (GLSGAGKS).

The protein belongs to the ABC transporter superfamily. Phosphonates importer (TC 3.A.1.9.1) family. The complex is composed of two ATP-binding proteins (PhnC), two transmembrane proteins (PhnE) and a solute-binding protein (PhnD).

Its subcellular location is the cell membrane. The catalysed reaction is phosphonate(out) + ATP + H2O = phosphonate(in) + ADP + phosphate + H(+). Part of the ABC transporter complex PhnCDE involved in phosphonates import. Responsible for energy coupling to the transport system. The chain is Phosphonates import ATP-binding protein PhnC 3 from Halalkalibacterium halodurans (strain ATCC BAA-125 / DSM 18197 / FERM 7344 / JCM 9153 / C-125) (Bacillus halodurans).